Reading from the N-terminus, the 263-residue chain is tRNA pseudouridine synthase A (263 aa).

Asp57 (nucleophile) is an active-site residue. Tyr115 serves as a coordination point for substrate.

It belongs to the tRNA pseudouridine synthase TruA family. As to quaternary structure, homodimer.

The enzyme catalyses uridine(38/39/40) in tRNA = pseudouridine(38/39/40) in tRNA. Formation of pseudouridine at positions 38, 39 and 40 in the anticodon stem and loop of transfer RNAs. The sequence is that of tRNA pseudouridine synthase A from Buchnera aphidicola subsp. Schizaphis graminum (strain Sg).